The primary structure comprises 259 residues: Uridylate kinase (259 aa).

Residue 10–13 (KLSG) participates in ATP binding. Gly52 contributes to the UMP binding site. Positions 53 and 57 each coordinate ATP. UMP-binding positions include Asp72 and 134–141 (NGQPFLTT). Residues Tyr168 and Asp171 each coordinate ATP. Residues 236–259 (ISSSPEKSEEFGNEVLASPAESTA) form a disordered region.

It belongs to the UMP kinase family. Homohexamer.

The protein resides in the cytoplasm. The enzyme catalyses UMP + ATP = UDP + ADP. It participates in pyrimidine metabolism; CTP biosynthesis via de novo pathway; UDP from UMP (UMPK route): step 1/1. Its activity is regulated as follows. Inhibited by UTP. Catalyzes the reversible phosphorylation of UMP to UDP. This chain is Uridylate kinase, found in Frankia casuarinae (strain DSM 45818 / CECT 9043 / HFP020203 / CcI3).